The following is a 485-amino-acid chain: Glutamate--tRNA ligase (485 aa).

The 'HIGH' region signature appears at proline 11–asparagine 21. A 'KMSKS' region motif is present at residues lysine 252–arginine 256. An ATP-binding site is contributed by lysine 255.

Belongs to the class-I aminoacyl-tRNA synthetase family. Glutamate--tRNA ligase type 1 subfamily. As to quaternary structure, monomer.

Its subcellular location is the cytoplasm. The catalysed reaction is tRNA(Glu) + L-glutamate + ATP = L-glutamyl-tRNA(Glu) + AMP + diphosphate. In terms of biological role, catalyzes the attachment of glutamate to tRNA(Glu) in a two-step reaction: glutamate is first activated by ATP to form Glu-AMP and then transferred to the acceptor end of tRNA(Glu). The polypeptide is Glutamate--tRNA ligase (Bacillus cereus (strain ATCC 10987 / NRS 248)).